A 423-amino-acid polypeptide reads, in one-letter code: Diaminobutyrate--2-oxoglutarate transaminase (423 aa).

Lysine 271 is modified (N6-(pyridoxal phosphate)lysine).

This sequence belongs to the class-III pyridoxal-phosphate-dependent aminotransferase family. It depends on pyridoxal 5'-phosphate as a cofactor.

It catalyses the reaction L-2,4-diaminobutanoate + 2-oxoglutarate = L-aspartate 4-semialdehyde + L-glutamate. It participates in amine and polyamine biosynthesis; ectoine biosynthesis; L-ectoine from L-aspartate 4-semialdehyde: step 1/3. In terms of biological role, catalyzes reversively the conversion of L-aspartate beta-semialdehyde (ASA) to L-2,4-diaminobutyrate (DABA) by transamination with L-glutamate. The chain is Diaminobutyrate--2-oxoglutarate transaminase (ectB) from Streptomyces coelicolor (strain ATCC BAA-471 / A3(2) / M145).